The sequence spans 1206 residues: DNA-directed RNA polymerase subunit beta' (1206 aa).

4 residues coordinate Zn(2+): C60, C62, C75, and C78. D449, D451, and D453 together coordinate Mg(2+). C822, C896, C903, and C906 together coordinate Zn(2+).

Belongs to the RNA polymerase beta' chain family. In terms of assembly, the RNAP catalytic core consists of 2 alpha, 1 beta, 1 beta' and 1 omega subunit. When a sigma factor is associated with the core the holoenzyme is formed, which can initiate transcription. Mg(2+) is required as a cofactor. It depends on Zn(2+) as a cofactor.

It carries out the reaction RNA(n) + a ribonucleoside 5'-triphosphate = RNA(n+1) + diphosphate. Functionally, DNA-dependent RNA polymerase catalyzes the transcription of DNA into RNA using the four ribonucleoside triphosphates as substrates. The chain is DNA-directed RNA polymerase subunit beta' from Staphylococcus haemolyticus (strain JCSC1435).